A 145-amino-acid polypeptide reads, in one-letter code: Large ribosomal subunit protein bL19 (145 aa).

It belongs to the bacterial ribosomal protein bL19 family.

Functionally, this protein is located at the 30S-50S ribosomal subunit interface and may play a role in the structure and function of the aminoacyl-tRNA binding site. In Brucella anthropi (strain ATCC 49188 / DSM 6882 / CCUG 24695 / JCM 21032 / LMG 3331 / NBRC 15819 / NCTC 12168 / Alc 37) (Ochrobactrum anthropi), this protein is Large ribosomal subunit protein bL19.